A 133-amino-acid chain; its full sequence is Large ribosomal subunit protein bL17 (133 aa).

Belongs to the bacterial ribosomal protein bL17 family. Part of the 50S ribosomal subunit. Contacts protein L32.

In Nitratidesulfovibrio vulgaris (strain DSM 19637 / Miyazaki F) (Desulfovibrio vulgaris), this protein is Large ribosomal subunit protein bL17.